We begin with the raw amino-acid sequence, 725 residues long: MDTFITRNFQTTIIQKAKNTMAEFMEDPELQPAMLFNICVHLEVCYVISDMNFLDEEGKAYTALEGQGKEQNLRPQYEVIEGMPRNIAWMVQRSLAQEHGIETPKYLADLFDYKTKRFIEVGITKGLADDYFWKKKEKLGNSMELMIFSYNQDYSLSNESSLDEEGKGRVLSRLTELQAELSLKNLWQVLIGEEDIEKGIDFKLGQTISRLRDISVPAGFSNFEGMRSYIDNIDPKGAIERNLARMSPLVSVTPKKLKWEDLRPIGPHIYNHELPEVPYNAFLLMSDELGLANMTEGKSKKPKTLAKECLEKYSTLRDQTDPILIMKSEKANENFLWKLWRDCVNTISNEETSNELQKTNYAKWATGDGLTYQKIMKEVAIDDETMCQEEPKIPNKCRVAAWVQTEMNLLSTLTSKRALDLPEIGPDVAPVEHVGSERRKYFVNEINYCKASTVMMKYVLFHTSLLNESNASMGKYKVIPITNRVNEKGESFDMLYGLAVKGQSHLRGDTDVVTVVTFEFSSTDPRVDSGKWPKYTVFRIGSLFVSGREKSVYLYCRVNGTNKIQMKWGMEARRCLLQSMQQMEAIVEQESSIQGYDMTKACFKEDRVNSPKTFSIGTQEGKLVKGSFGKALRVIFTKCLMHYVFGNAQLEGFSAESRRLLLLIQALKDRKGPWVFDLEGMYSGIEECISNNPWVIQSAYWFNEWLGFEKEGSKVLESVDEIMDE.

Mn(2+)-binding residues include histidine 41, glutamate 81, aspartate 109, glutamate 120, and valine 121. The short motif at 125 to 140 is the Nuclear localization signal 1 (NLS1) element; that stretch reads KGLADDYFWKKKEKLG. A Nuclear localization signal 2 (NLS2) motif is present at residues 183-244; it reads LKNLWQVLIG…PKGAIERNLA (62 aa).

It belongs to the influenza viruses PA family. Influenza RNA polymerase is composed of three subunits: PB1, PB2 and PA. Interacts (via C-terminus) with PB1 (via N-terminus). Mn(2+) is required as a cofactor. Phosphorylated on serines and threonines by host kinases, including human casein kinase II.

Its subcellular location is the host cytoplasm. The protein localises to the host nucleus. Its function is as follows. Plays an essential role in viral RNA transcription and replication by forming the heterotrimeric polymerase complex together with PB1 and PB2 subunits. The complex transcribes viral mRNAs by using a unique mechanism called cap-snatching. It consists in the hijacking and cleavage of host capped pre-mRNAs. These short capped RNAs are then used as primers for viral mRNAs. The PB2 subunit is responsible for the binding of the 5' cap of cellular pre-mRNAs which are subsequently cleaved after 10-13 nucleotides by the PA subunit that carries the endonuclease activity. In Homo sapiens (Human), this protein is Polymerase acidic protein.